The sequence spans 272 residues: Putative imidazole glycerol phosphate synthase subunit hisF2 (272 aa).

Residue aspartate 133 is part of the active site.

Belongs to the HisA/HisF family. As to quaternary structure, heterodimer of HisH and HisF.

Its subcellular location is the cytoplasm. It catalyses the reaction 5-[(5-phospho-1-deoxy-D-ribulos-1-ylimino)methylamino]-1-(5-phospho-beta-D-ribosyl)imidazole-4-carboxamide + L-glutamine = D-erythro-1-(imidazol-4-yl)glycerol 3-phosphate + 5-amino-1-(5-phospho-beta-D-ribosyl)imidazole-4-carboxamide + L-glutamate + H(+). It functions in the pathway amino-acid biosynthesis; L-histidine biosynthesis; L-histidine from 5-phospho-alpha-D-ribose 1-diphosphate: step 5/9. Its function is as follows. IGPS catalyzes the conversion of PRFAR and glutamine to IGP, AICAR and glutamate. The HisF subunit catalyzes the cyclization activity that produces IGP and AICAR from PRFAR using the ammonia provided by the HisH subunit. This Vibrio vulnificus (strain YJ016) protein is Putative imidazole glycerol phosphate synthase subunit hisF2 (hisF2).